The chain runs to 385 residues: S-adenosylmethionine synthase (385 aa).

H15 contacts ATP. Residue D17 coordinates Mg(2+). E43 provides a ligand contact to K(+). Residues E56 and Q99 each coordinate L-methionine. A flexible loop region spans residues 99–109 (QSPDINKGINN). ATP-binding positions include 164–166 (DAK), 230–231 (RF), D239, 245–246 (RK), A262, and K266. Residue D239 coordinates L-methionine. An L-methionine-binding site is contributed by K270.

The protein belongs to the AdoMet synthase family. In terms of assembly, homotetramer; dimer of dimers. Requires Mg(2+) as cofactor. The cofactor is K(+).

It localises to the cytoplasm. It carries out the reaction L-methionine + ATP + H2O = S-adenosyl-L-methionine + phosphate + diphosphate. The protein operates within amino-acid biosynthesis; S-adenosyl-L-methionine biosynthesis; S-adenosyl-L-methionine from L-methionine: step 1/1. In terms of biological role, catalyzes the formation of S-adenosylmethionine (AdoMet) from methionine and ATP. The overall synthetic reaction is composed of two sequential steps, AdoMet formation and the subsequent tripolyphosphate hydrolysis which occurs prior to release of AdoMet from the enzyme. This is S-adenosylmethionine synthase from Baumannia cicadellinicola subsp. Homalodisca coagulata.